Reading from the N-terminus, the 309-residue chain is tRNA pseudouridine synthase B (309 aa).

Asp39 acts as the Nucleophile in catalysis.

The protein belongs to the pseudouridine synthase TruB family. Type 1 subfamily.

The enzyme catalyses uridine(55) in tRNA = pseudouridine(55) in tRNA. Responsible for synthesis of pseudouridine from uracil-55 in the psi GC loop of transfer RNAs. In Bacillus licheniformis (strain ATCC 14580 / DSM 13 / JCM 2505 / CCUG 7422 / NBRC 12200 / NCIMB 9375 / NCTC 10341 / NRRL NRS-1264 / Gibson 46), this protein is tRNA pseudouridine synthase B.